A 357-amino-acid chain; its full sequence is tRNA pseudouridine synthase Pus10 (357 aa).

The 118-residue stretch at 1-118 (MNLCRECYGI…TFTFELQIRP (118 aa)) folds into the THUMP domain. Asp187 (nucleophile) is an active-site residue. Residues Tyr251 and Tyr322 each coordinate substrate.

The protein belongs to the pseudouridine synthase Pus10 family.

The catalysed reaction is uridine(54) in tRNA = pseudouridine(54) in tRNA. It carries out the reaction uridine(55) in tRNA = pseudouridine(55) in tRNA. In terms of biological role, responsible for synthesis of pseudouridine from uracil-54 and uracil-55 in the psi GC loop of transfer RNAs. This chain is tRNA pseudouridine synthase Pus10, found in Archaeoglobus fulgidus (strain ATCC 49558 / DSM 4304 / JCM 9628 / NBRC 100126 / VC-16).